The chain runs to 188 residues: Augmin complex subunit dgt4 (188 aa).

Residues 141–163 (QREFAQNQEALRSLRTAVDGLEN) adopt a coiled-coil conformation.

Component of the augmin complex composed of dgt2, dgt3, dgt4, dgt5, dgt6, msd1, msd5 and wac. The complex interacts directly or indirectly with microtubules and is required for centrosome-independent generation of spindle microtubules.

The protein resides in the cytoplasm. Its subcellular location is the cytoskeleton. It localises to the spindle. In terms of biological role, as part of the augmin complex, plays a role in centrosome-independent generation of spindle microtubules. The complex is required for mitotic spindle assembly through its involvement in localizing gamma-tubulin to spindle microtubules. The polypeptide is Augmin complex subunit dgt4 (Drosophila melanogaster (Fruit fly)).